Reading from the N-terminus, the 311-residue chain is Progestin and adipoQ receptor family member 3 (311 aa).

Positions Met-1–Trp-20 are required for interaction with SREBF2. At Met-1–Thr-70 the chain is on the cytoplasmic side. The segment at Lys-41–Ile-60 is required for interaction with SCAP. The interval Lys-61–Val-71 is golgi targeting. A helical membrane pass occupies residues Val-71 to Met-91. Over Thr-92–Asp-104 the chain is Lumenal. Residues Phe-105–Tyr-125 form a helical membrane-spanning segment. Residues His-126 to Tyr-145 are Cytoplasmic-facing. A helical transmembrane segment spans residues Ala-146–Cys-166. Residues Asn-167–Gln-172 are Lumenal-facing. Residues Val-173–Ser-193 traverse the membrane as a helical segment. Residues Tyr-194–Arg-203 lie on the Cytoplasmic side of the membrane. Residues Pro-204–Leu-224 traverse the membrane as a helical segment. Over Asn-225–Asp-235 the chain is Lumenal. The chain crosses the membrane as a helical span at residues Phe-236 to Ser-256. Over Lys-257–Gln-275 the chain is Cytoplasmic. The chain crosses the membrane as a helical span at residues Ile-276–Met-296. Topologically, residues Gln-297–Leu-311 are lumenal. A golgi targeting region spans residues Arg-299–Pro-303.

It belongs to the ADIPOR family. In terms of assembly, interacts with SCAP and SREBF2; the interactions are direct, increase in low cholesterol conditions and tether SCAP:SREBP complex to the Golgi apparatus. Interaction with SCAP is mutually exclusive with INSIG1. In hepatocytes, interacts with PPARA and HUWE1; the interactions promote PPARA poylubiquitination and HUWE1-mediated degradation. In macrophages, interacts with PPARG and STUB1; the interactions promote PPARG poylubiquitination and STUB1-mediated degradation.

The protein resides in the golgi apparatus membrane. Functionally, golgi-anchored protein which modulates its interactors acitivies by tethering them to the Golgi apparatus. Functions as a spatial regulator of RAF1 kinase by sequestrating it to the Golgi apparatus. Acts as a positive regulator of cholesterol biosynthesis by mediating the anchoring of the SCAP:SREBP complex in the Golgi apparatus, thereby promoting SCAP:SREBF2 complex formation, potentiating SREBF2 and SREBF1 processing and enhancing lipid synthesis. Also regulates PPARA and PPARG functions by mediating their interaction with E3 ubiquitin ligases, such as STUB1 or HUWE1, leading to their polyubiquitination and proteasome-mediated degradation. In Mus musculus (Mouse), this protein is Progestin and adipoQ receptor family member 3.